Reading from the N-terminus, the 668-residue chain is Tastin (668 aa).

Disordered stretches follow at residues 1-102, 154-177, and 189-285; these read MTTL…GGSN, ERKG…PRIP, and FSRL…GRHH. A Phosphoserine modification is found at serine 16. Composition is skewed to polar residues over residues 27–37 and 55–64; these read QRCQDFSSVKS and PRSTQRQRPL. Serine 97 carries the phosphoserine modification. Residues 158 to 168 are compositionally biased toward polar residues; the sequence is GTTQRGQSARS. Serine 169 carries the post-translational modification Phosphoserine. Basic and acidic residues-rich tracts occupy residues 227 to 246 and 269 to 282; these read ELRR…DRRT and GEQE…DGGG. Phosphoserine occurs at positions 306, 324, and 338. 2 disordered regions span residues 364 to 392 and 462 to 502; these read ITLQ…HQEL and TEPL…AEPE.

In terms of assembly, directly binds bystin, and indirectly trophinin.

The protein resides in the cytoplasm. Could be involved with bystin and trophinin in a cell adhesion molecule complex that mediates an initial attachment of the blastocyst to uterine epithelial cells at the time of the embryo implantation. This chain is Tastin, found in Mus musculus (Mouse).